The following is a 360-amino-acid chain: GTPase Obg (360 aa).

The Obg domain maps to 1–156; the sequence is MFVDSVEIII…KCVRLELKLI (156 aa). In terms of domain architecture, OBG-type G spans 157–360; sequence ADIGLVGFPN…LKFVLLKALQ (204 aa). GTP is bound by residues 163–170, 188–192, 210–213, 279–282, and 341–343; these read GFPNAGKS, FTTLV, DIPG, NKCD, and SAV. Positions 170 and 190 each coordinate Mg(2+).

This sequence belongs to the TRAFAC class OBG-HflX-like GTPase superfamily. OBG GTPase family. As to quaternary structure, monomer. The cofactor is Mg(2+).

The protein localises to the cytoplasm. In terms of biological role, an essential GTPase which binds GTP, GDP and possibly (p)ppGpp with moderate affinity, with high nucleotide exchange rates and a fairly low GTP hydrolysis rate. Plays a role in control of the cell cycle, stress response, ribosome biogenesis and in those bacteria that undergo differentiation, in morphogenesis control. This chain is GTPase Obg, found in Helicobacter pylori (strain P12).